We begin with the raw amino-acid sequence, 464 residues long: Chitobiosyldiphosphodolichol beta-mannosyltransferase (464 aa).

Residues 1 to 2 (MA) are Lumenal-facing. The chain crosses the membrane as a helical span at residues 3–23 (ASCLVLLALCLLLPLLLLGGW). The Cytoplasmic portion of the chain corresponds to 24–99 (KRWRRGRAAR…ELQSLAVGPR (76 aa)). Positions 100 to 120 (VFQYGVKVVLQAMYLLWKLMW) form an intramembrane region, helical. Residues 121 to 464 (REPGAYIFLQ…QTVLPLVMDT (344 aa)) are Cytoplasmic-facing. Position 242 is a phosphoserine (Ser-242). Residues 243–262 (PFRARSEPEDPVTERSAFTE) form a disordered region.

Belongs to the glycosyltransferase group 1 family. Glycosyltransferase 33 subfamily.

It localises to the endoplasmic reticulum membrane. It catalyses the reaction an N,N'-diacetylchitobiosyl-diphospho-di-trans,poly-cis-dolichol + GDP-alpha-D-mannose = a beta-D-Man-(1-&gt;4)-beta-D-GlcNAc-(1-&gt;4)-alpha-D-GlcNAc-diphospho-di-trans,poly-cis-dolichol + GDP + H(+). The protein operates within protein modification; protein glycosylation. Functionally, mannosyltransferase that operates in the biosynthetic pathway of dolichol-linked oligosaccharides, the glycan precursors employed in protein asparagine (N)-glycosylation. The assembly of dolichol-linked oligosaccharides begins on the cytosolic side of the endoplasmic reticulum membrane and finishes in its lumen. The sequential addition of sugars to dolichol pyrophosphate produces dolichol-linked oligosaccharides containing fourteen sugars, including two GlcNAcs, nine mannoses and three glucoses. Once assembled, the oligosaccharide is transferred from the lipid to nascent proteins by oligosaccharyltransferases. Catalyzes, on the cytoplasmic face of the endoplasmic reticulum, the addition of the first mannose residues to the dolichol-linked oligosaccharide chain, to produce Man1GlcNAc(2)-PP-dolichol core oligosaccharide. Man1GlcNAc(2)-PP-dolichol is a substrate for ALG2, the following enzyme in the biosynthetic pathway. The chain is Chitobiosyldiphosphodolichol beta-mannosyltransferase from Homo sapiens (Human).